We begin with the raw amino-acid sequence, 121 residues long: Small ribosomal subunit protein uS13 (121 aa).

A disordered region spans residues 97–121 (VRGQRTRTNARTRRGARKTVAGKKK). The segment covering 100 to 121 (QRTRTNARTRRGARKTVAGKKK) has biased composition (basic residues).

The protein belongs to the universal ribosomal protein uS13 family. Part of the 30S ribosomal subunit. Forms a loose heterodimer with protein S19. Forms two bridges to the 50S subunit in the 70S ribosome.

Its function is as follows. Located at the top of the head of the 30S subunit, it contacts several helices of the 16S rRNA. In the 70S ribosome it contacts the 23S rRNA (bridge B1a) and protein L5 of the 50S subunit (bridge B1b), connecting the 2 subunits; these bridges are implicated in subunit movement. Contacts the tRNAs in the A and P-sites. This is Small ribosomal subunit protein uS13 from Synechococcus sp. (strain CC9605).